We begin with the raw amino-acid sequence, 495 residues long: MAKLSSLLNPIISKILEIYVYSWYSGISKDALFPSQCEQVGGSIVHELEKRLSRQDAMDLLFYEIPFLLIKHIENTEEAKLRFALPQGQILEIDTIYHSLHPHIALEKEENELVYCRLLVEDILKYLLPATNSKSEIECVILREALAVQIHKSIQVASSPETMYKFIIYLSKAILQPSRRPWKESITTAVRWVWHAFRILLITRGVPYFSTAWFQFYLKLFSQKDNVSSSDLTRWFFFYTLLYPWIALVSAFVAETMTLCCIVTIFYDKNVNRQWKQYILTSVSNMDKGNPSGGSQSTNVTTFRRFSQSSYPRRSNYRRRISTSSKSLYELSPSKFKSIPITSNPPPMLNLSKGSTSVEPTFCETNASVALSTVTSTPVFSTDSSPLSSRTRENLLSLIPSAVSSPTKANTNKSHQRSFSIPKATKDSQTPSENSAATLKQAAIDAYSQIPVIPFFLPSDKLIMLVESEYRNKHIFYSLLNSFTMVMFPELRHTK.

One can recognise a PXA domain in the interval 1–174 (MAKLSSLLNP…KFIIYLSKAI (174 aa)). 2 consecutive transmembrane segments (helical) span residues 7 to 27 (LLNPIISKILEIYVYSWYSGI) and 235 to 255 (WFFFYTLLYPWIALVSAFVAE). 2 stretches are compositionally biased toward polar residues: residues 402–419 (AVSSPTKANTNKSHQRSF) and 427–436 (DSQTPSENSA). The interval 402–436 (AVSSPTKANTNKSHQRSFSIPKATKDSQTPSENSA) is disordered. The chain crosses the membrane as a helical span at residues 446–466 (AYSQIPVIPFFLPSDKLIMLV).

The protein resides in the endosome membrane. Functionally, required for required for normal vacuolar morphology and for vacuolar protein transport. Also required for endosome-to-Golgi protein transport. The chain is PXA domain protein 1 (pxa1) from Schizosaccharomyces pombe (strain 972 / ATCC 24843) (Fission yeast).